A 339-amino-acid polypeptide reads, in one-letter code: DNA-directed RNA polymerase subunit alpha (339 aa).

The tract at residues 1–235 (MTIQKNWQEL…DQLNVFVNFE (235 aa)) is alpha N-terminal domain (alpha-NTD). The tract at residues 251 to 339 (FNPAFLKKVD…ELAKRFEDHY (89 aa)) is alpha C-terminal domain (alpha-CTD).

Belongs to the RNA polymerase alpha chain family. As to quaternary structure, homodimer. The RNAP catalytic core consists of 2 alpha, 1 beta, 1 beta' and 1 omega subunit. When a sigma factor is associated with the core the holoenzyme is formed, which can initiate transcription.

The enzyme catalyses RNA(n) + a ribonucleoside 5'-triphosphate = RNA(n+1) + diphosphate. DNA-dependent RNA polymerase catalyzes the transcription of DNA into RNA using the four ribonucleoside triphosphates as substrates. In Rhodopseudomonas palustris (strain BisB18), this protein is DNA-directed RNA polymerase subunit alpha.